The sequence spans 318 residues: Beta-sarcoglycan (318 aa).

A disordered region spans residues 1-32; the sequence is MAAAAAAAAEQQSSNGPVKKSMREKAVERRNV. The Cytoplasmic portion of the chain corresponds to 1 to 65; sequence MAAAAAAAAE…GLRGRKGNLA (65 aa). Residues 21 to 32 are compositionally biased toward basic and acidic residues; that stretch reads SMREKAVERRNV. Residues 66-86 form a helical; Signal-anchor for type II membrane protein membrane-spanning segment; the sequence is ICVIVLLFLLAVINLIITLVI. Topologically, residues 87–318 are extracellular; sequence WAVIRIGPNG…VSDNPCGNTH (232 aa). N-linked (GlcNAc...) asparagine glycans are attached at residues asparagine 158, asparagine 211, and asparagine 258. 2 disulfides stabilise this stretch: cysteine 288-cysteine 314 and cysteine 290-cysteine 307.

This sequence belongs to the sarcoglycan beta/delta/gamma/zeta family. Cross-link to form 2 major subcomplexes: one consisting of SGCB, SGCD and SGCG and the other consisting of SGCB and SGCD. The association between SGCB and SGCG is particularly strong while SGCA is loosely associated with the other sarcoglycans. Disulfide bonds are present.

The protein resides in the cell membrane. It localises to the sarcolemma. The protein localises to the cytoplasm. It is found in the cytoskeleton. Its function is as follows. Component of the sarcoglycan complex, a subcomplex of the dystrophin-glycoprotein complex which forms a link between the F-actin cytoskeleton and the extracellular matrix. This Oryctolagus cuniculus (Rabbit) protein is Beta-sarcoglycan (SGCB).